Reading from the N-terminus, the 823-residue chain is ATP-dependent DNA helicase At3g02060, chloroplastic (823 aa).

Residues 1-53 constitute a chloroplast transit peptide; the sequence is MMSLLPNPDPITVPLVLKLCSFPPPRRLFSLRLRRFTRKSSSLLPLVAVSSLS. The region spanning 285–447 is the Helicase ATP-binding domain; sequence LTERETPMDR…LTGFRDASLI (163 aa). Position 298–305 (298–305) interacts with ATP; it reads GDVGFGKT. The short motif at 400–403 is the DEEQ box element; the sequence is DEEQ. The Helicase C-terminal domain occupies 465–622; sequence RKEKVIEAIK…GFQLAEKDMG (158 aa).

Belongs to the helicase family.

Its subcellular location is the plastid. It localises to the chloroplast. It catalyses the reaction ATP + H2O = ADP + phosphate + H(+). The sequence is that of ATP-dependent DNA helicase At3g02060, chloroplastic from Arabidopsis thaliana (Mouse-ear cress).